The chain runs to 159 residues: Phosphopantetheine adenylyltransferase (159 aa).

T10 is a binding site for substrate. ATP is bound by residues 10-11 (TF) and H18. Substrate-binding residues include K42, M74, and R88. ATP-binding positions include 89–91 (GLR), E99, and 124–130 (WSFISSS).

The protein belongs to the bacterial CoaD family. Homohexamer. The cofactor is Mg(2+).

The protein localises to the cytoplasm. The enzyme catalyses (R)-4'-phosphopantetheine + ATP + H(+) = 3'-dephospho-CoA + diphosphate. It participates in cofactor biosynthesis; coenzyme A biosynthesis; CoA from (R)-pantothenate: step 4/5. In terms of biological role, reversibly transfers an adenylyl group from ATP to 4'-phosphopantetheine, yielding dephospho-CoA (dPCoA) and pyrophosphate. This chain is Phosphopantetheine adenylyltransferase, found in Yersinia enterocolitica serotype O:8 / biotype 1B (strain NCTC 13174 / 8081).